A 29-amino-acid chain; its full sequence is Kunitz-type serine protease inhibitor RsTIQ7 (29 aa).

Positions 6–26 constitute a BPTI/Kunitz inhibitor domain; sequence QCVPTADPGPCKAYIPMWWYN.

Serine protease inhibitor. Inhibits trypsin, elastase, plasmin and kallikrein. The chain is Kunitz-type serine protease inhibitor RsTIQ7 from Rhipicephalus sanguineus (Brown dog tick).